The primary structure comprises 776 residues: Heat shock protein 110 (776 aa).

A disordered region spans residues 741–776 (ILNKKKPAAPAPPKKEEPQPAAGDQPQSQPGEMDVD).

It belongs to the heat shock protein 70 family.

The sequence is that of Heat shock protein 110 from Caenorhabditis elegans.